A 476-amino-acid polypeptide reads, in one-letter code: 3-isopropylmalate dehydratase large subunit (476 aa).

The [4Fe-4S] cluster site is built by C353, C413, and C416.

This sequence belongs to the aconitase/IPM isomerase family. LeuC type 1 subfamily. In terms of assembly, heterodimer of LeuC and LeuD. Requires [4Fe-4S] cluster as cofactor.

It catalyses the reaction (2R,3S)-3-isopropylmalate = (2S)-2-isopropylmalate. Its pathway is amino-acid biosynthesis; L-leucine biosynthesis; L-leucine from 3-methyl-2-oxobutanoate: step 2/4. Catalyzes the isomerization between 2-isopropylmalate and 3-isopropylmalate, via the formation of 2-isopropylmaleate. In Yersinia pseudotuberculosis serotype IB (strain PB1/+), this protein is 3-isopropylmalate dehydratase large subunit.